A 222-amino-acid polypeptide reads, in one-letter code: Flagellar L-ring protein (222 aa).

Residues 1 to 21 (MQTFLYPRTWLILGLLLLGSG) form the signal peptide. A lipid anchor (N-palmitoyl cysteine) is attached at Cys-22. Cys-22 carries S-diacylglycerol cysteine lipidation.

Belongs to the FlgH family. As to quaternary structure, the basal body constitutes a major portion of the flagellar organelle and consists of four rings (L,P,S, and M) mounted on a central rod.

The protein localises to the cell outer membrane. It localises to the bacterial flagellum basal body. Assembles around the rod to form the L-ring and probably protects the motor/basal body from shearing forces during rotation. This Methylobacillus flagellatus (strain ATCC 51484 / DSM 6875 / VKM B-1610 / KT) protein is Flagellar L-ring protein.